The chain runs to 132 residues: Transcription antitermination protein NusB (132 aa).

It belongs to the NusB family.

Its function is as follows. Involved in transcription antitermination. Required for transcription of ribosomal RNA (rRNA) genes. Binds specifically to the boxA antiterminator sequence of the ribosomal RNA (rrn) operons. This chain is Transcription antitermination protein NusB, found in Campylobacter jejuni subsp. doylei (strain ATCC BAA-1458 / RM4099 / 269.97).